Consider the following 141-residue polypeptide: MASVPSAGCLLARNQYYRKASVSSGPSLTGPDSANFVGDDKTQLGLPKVAESTWWFKSFFQSVPVLNVKGEDQSACGGNGPGSRSKVPSGTNNHSLLQQEESQLLGEMADSGTVNRFRNSQTVKDKPRPFHGAPKDTNSPQ.

The segment at 72–141 (DQSACGGNGP…GAPKDTNSPQ (70 aa)) is disordered. The span at 95-105 (SLLQQEESQLL) shows a compositional bias: low complexity. Polar residues predominate over residues 112 to 122 (GTVNRFRNSQT).

This sequence belongs to the PPDPF family.

The polypeptide is Pancreatic progenitor cell differentiation and proliferation factor-like protein (Bos taurus (Bovine)).